Reading from the N-terminus, the 139-residue chain is Hydrogenase maturation factor HypA (139 aa).

His-2 lines the Ni(2+) pocket. Residues Cys-75, Cys-78, Cys-111, and Cys-114 each contribute to the Zn(2+) site.

Belongs to the HypA/HybF family.

Functionally, involved in the maturation of [NiFe] hydrogenases. Required for nickel insertion into the metal center of the hydrogenase. The polypeptide is Hydrogenase maturation factor HypA (Ignicoccus hospitalis (strain KIN4/I / DSM 18386 / JCM 14125)).